The primary structure comprises 158 residues: C-type lectin mannose-binding isoform (158 aa).

The N-terminal stretch at 1-20 (MGRFLLVTLSMLVVTFSLNE) is a signal peptide. Intrachain disulfides connect C26-C37, C54-C154, and C129-C146. One can recognise a C-type lectin domain in the interval 33 to 155 (KNGFCYKVFN…CEALYHFICQ (123 aa)). The Mannose-binding motif lies at 119–121 (EPN). A glycan (N-linked (GlcNAc...) asparagine) is linked at N121. E127, N142, and D143 together coordinate Ca(2+).

This sequence belongs to the true venom lectin family. Homodimer; disulfide-linked. As to expression, expressed by the venom gland.

It is found in the secreted. Functionally, mannose-binding lectin that binds to and agglutinates erythrocytes in a calcium-dependent manner. In Notechis scutatus scutatus (Mainland tiger snake), this protein is C-type lectin mannose-binding isoform.